A 400-amino-acid chain; its full sequence is Na(+)/H(+) antiporter NhaA (400 aa).

11 consecutive transmembrane segments (helical) span residues 10–30 (FNLE…AMII), 60–80 (AHHW…GLEL), 95–115 (IILP…VYLF), 126–146 (GWAI…SLLG), 155–175 (VFLV…IALF), 178–198 (NDLS…LYLL), 218–238 (VAVL…ALFI), 265–285 (GILP…AGFG), 295–315 (IAAG…WLIF), 334–354 (AALL…LAFA), and 364–384 (LGII…LKAT).

It belongs to the NhaA Na(+)/H(+) (TC 2.A.33) antiporter family.

It localises to the cell inner membrane. The enzyme catalyses Na(+)(in) + 2 H(+)(out) = Na(+)(out) + 2 H(+)(in). Na(+)/H(+) antiporter that extrudes sodium in exchange for external protons. The chain is Na(+)/H(+) antiporter NhaA from Psychrobacter cryohalolentis (strain ATCC BAA-1226 / DSM 17306 / VKM B-2378 / K5).